We begin with the raw amino-acid sequence, 222 residues long: Ribonuclease S-3 (222 aa).

An N-terminal signal peptide occupies residues 1–22 (MVHVVMMVFLLIVLILCSSTVG). Gln31 contacts RNA. Cysteines 37 and 44 form a disulfide. The N-linked (GlcNAc...) asparagine glycan is linked to Asn40. Residues His55, 92–93 (NV), Phe102, 105–106 (KE), and 109–110 (KH) contribute to the RNA site. The active-site Proton donor is the His55. Cys70 and Cys113 are oxidised to a cystine. Catalysis depends on residues Glu106 and Lys109. Residue His110 is the Proton acceptor of the active site. An N-linked (GlcNAc...) asparagine glycan is attached at Asn138. Cystine bridges form between Cys177/Cys215 and Cys192/Cys203.

It belongs to the RNase T2 family. In terms of processing, N-linked core structure at Asn-138 contains xylose.

The enzyme catalyses a ribonucleotidyl-ribonucleotide-RNA + H2O = a 3'-end 3'-phospho-ribonucleotide-RNA + a 5'-end dephospho-ribonucleoside-RNA + H(+). In terms of biological role, self-incompatibility (SI) is the inherited ability of a flowering plant to prevent self-fertilization by discriminating between self and non-self pollen during pollination. In many species, self-incompatibility is controlled by the single, multiallelic locus S. This is Ribonuclease S-3 from Pyrus pyrifolia (Chinese pear).